A 342-amino-acid polypeptide reads, in one-letter code: tRNA(Ile)-lysidine synthase (342 aa).

Position 31–36 (31–36 (SGGQDS)) interacts with ATP.

The protein belongs to the tRNA(Ile)-lysidine synthase family.

The protein localises to the cytoplasm. The catalysed reaction is cytidine(34) in tRNA(Ile2) + L-lysine + ATP = lysidine(34) in tRNA(Ile2) + AMP + diphosphate + H(+). Ligates lysine onto the cytidine present at position 34 of the AUA codon-specific tRNA(Ile) that contains the anticodon CAU, in an ATP-dependent manner. Cytidine is converted to lysidine, thus changing the amino acid specificity of the tRNA from methionine to isoleucine. This Nostoc sp. (strain PCC 7120 / SAG 25.82 / UTEX 2576) protein is tRNA(Ile)-lysidine synthase.